Here is a 385-residue protein sequence, read N- to C-terminus: Calcium/calmodulin-dependent protein kinase type 1D (385 aa).

Positions 23 to 279 (FEFKETLGTG…CEQAARHPWI (257 aa)) constitute a Protein kinase domain. Residues 29–37 (LGTGAFSEV) and Lys52 each bind ATP. A Glycyl lysine isopeptide (Lys-Gly) (interchain with G-Cter in SUMO2) cross-link involves residue Lys113. At Ser122 the chain carries Phosphoserine. Asp144 serves as the catalytic Proton acceptor. Residue Thr180 is modified to Phosphothreonine; by CaMKK1 and CaMKK2. An autoinhibitory domain region spans residues 279–319 (IAGDTALSKNIHESVSAQIRKNFAKSKWRQAFNATAVVRHM). The tract at residues 299 to 320 (KNFAKSKWRQAFNATAVVRHMR) is calmodulin-binding. Residues 318–324 (HMRRLQL) carry the Nuclear export signal motif. Positions 363-385 (VAGVGAERRPRPTTVTTGHTGSK) are disordered. The span at 375-385 (TTVTTGHTGSK) shows a compositional bias: polar residues.

This sequence belongs to the protein kinase superfamily. CAMK Ser/Thr protein kinase family. CaMK subfamily. In terms of tissue distribution, expressed ubiquitously with high levels in brain and low levels in kidney. Isoform 2 is highly expressed in brain compared to other tissues. In hematopoietic cell lines predominant expression was detected in T and EC cells.

The protein resides in the cytoplasm. It is found in the nucleus. It catalyses the reaction L-seryl-[protein] + ATP = O-phospho-L-seryl-[protein] + ADP + H(+). It carries out the reaction L-threonyl-[protein] + ATP = O-phospho-L-threonyl-[protein] + ADP + H(+). Its activity is regulated as follows. Activated by Ca(2+)/calmodulin. Binding of calmodulin results in conformational change that relieves intrasteric autoinhibition and allows phosphorylation of Thr-180 within the activation loop by CaMKK1 or CaMKK2. Phosphorylation of Thr-180 results in several fold increase in total activity. Unlike CaMK4, may be unable to exhibit autonomous activity after Ca(2+)/calmodulin activation. Functionally, calcium/calmodulin-dependent protein kinase that operates in the calcium-triggered CaMKK-CaMK1 signaling cascade and, upon calcium influx, activates CREB-dependent gene transcription, regulates calcium-mediated granulocyte function and respiratory burst and promotes basal dendritic growth of hippocampal neurons. In neutrophil cells, required for cytokine-induced proliferative responses and activation of the respiratory burst. Activates the transcription factor CREB1 in hippocampal neuron nuclei. May play a role in apoptosis of erythroleukemia cells. In vitro, phosphorylates transcription factor CREM isoform Beta. Isoform 1 but not isoform 2 activates CREB1. The polypeptide is Calcium/calmodulin-dependent protein kinase type 1D (Camk1d) (Mus musculus (Mouse)).